Here is a 117-residue protein sequence, read N- to C-terminus: DCPSDWSSYEGHCYRVFQQEMTWDDAEKFCTQQHTGGHLVSFRSSEEVDFLVSILKFDLFWMGWRDIWNERRLQWSDGTKVNYKAWSAEPECIVCRATDNQWLSTSCSKTHNVVCKF.

3 cysteine pairs are disulfide-bonded: Cys-2-Cys-13, Cys-30-Cys-115, and Cys-92-Cys-107. The C-type lectin domain maps to 9–116 (YEGHCYRVFQ…CSKTHNVVCK (108 aa)).

It belongs to the snaclec family. Heterodimer of subunits alpha and beta; disulfide-linked. As to expression, expressed by the venom gland.

Its subcellular location is the secreted. Functionally, binds to the subunit GPIbalpha (GP1BA) of the platelet GPIb/V/IX receptor system. It inhibits ristocetin- and vWF-induced platelet aggregation in platelet-rich plasma by inhibiting the binding of vWF to GPIbalpha. The polypeptide is Snaclec CHH-B subunit beta (Crotalus horridus (Timber rattlesnake)).